The following is a 376-amino-acid chain: Chaperone protein DnaJ (376 aa).

The J domain maps to 5-70; it reads DYYEVLGVAR…EKRARYDRFG (66 aa). The segment at 137 to 215 adopts a CR-type zinc-finger fold; it reads GDEVTLRLPK…CKGSGQTQQV (79 aa). Cysteine 150, cysteine 153, cysteine 167, cysteine 170, cysteine 189, cysteine 192, cysteine 203, and cysteine 206 together coordinate Zn(2+). CXXCXGXG motif repeat units lie at residues 150-157, 167-174, 189-196, and 203-210; these read CDECGGSG, CRHCGGAG, CPVCRGEG, and CPKCKGSG.

Belongs to the DnaJ family. Homodimer. Zn(2+) serves as cofactor.

Its subcellular location is the cytoplasm. Its function is as follows. Participates actively in the response to hyperosmotic and heat shock by preventing the aggregation of stress-denatured proteins and by disaggregating proteins, also in an autonomous, DnaK-independent fashion. Unfolded proteins bind initially to DnaJ; upon interaction with the DnaJ-bound protein, DnaK hydrolyzes its bound ATP, resulting in the formation of a stable complex. GrpE releases ADP from DnaK; ATP binding to DnaK triggers the release of the substrate protein, thus completing the reaction cycle. Several rounds of ATP-dependent interactions between DnaJ, DnaK and GrpE are required for fully efficient folding. Also involved, together with DnaK and GrpE, in the DNA replication of plasmids through activation of initiation proteins. The protein is Chaperone protein DnaJ of Nitratidesulfovibrio vulgaris (strain ATCC 29579 / DSM 644 / CCUG 34227 / NCIMB 8303 / VKM B-1760 / Hildenborough) (Desulfovibrio vulgaris).